The following is a 317-amino-acid chain: Porphobilinogen deaminase (317 aa).

Cys-245 carries the post-translational modification S-(dipyrrolylmethanemethyl)cysteine.

It belongs to the HMBS family. As to quaternary structure, monomer. It depends on dipyrromethane as a cofactor.

The enzyme catalyses 4 porphobilinogen + H2O = hydroxymethylbilane + 4 NH4(+). It participates in porphyrin-containing compound metabolism; protoporphyrin-IX biosynthesis; coproporphyrinogen-III from 5-aminolevulinate: step 2/4. It functions in the pathway porphyrin-containing compound metabolism; chlorophyll biosynthesis. Its function is as follows. Tetrapolymerization of the monopyrrole PBG into the hydroxymethylbilane pre-uroporphyrinogen in several discrete steps. The chain is Porphobilinogen deaminase from Prochlorococcus marinus (strain MIT 9303).